Consider the following 124-residue polypeptide: Large ribosomal subunit protein mL52 (124 aa).

A mitochondrion-targeting transit peptide spans 1 to 23 (MAALGMLLSTGVRRLHCGSAARA). The tract at residues 99-124 (LQEEKRKQQNALKPKGVLLQNPGPSQ) is disordered.

It belongs to the mitochondrion-specific ribosomal protein mL52 family. Component of the mitochondrial ribosome large subunit (39S) which comprises a 16S rRNA and about 50 distinct proteins.

The protein localises to the mitochondrion. The protein is Large ribosomal subunit protein mL52 (MRPL52) of Bos taurus (Bovine).